Here is a 201-residue protein sequence, read N- to C-terminus: Small ribosomal subunit protein uS4 (201 aa).

Positions 103–167 (RRLQTIVTKK…SKIPQVLEKT (65 aa)) constitute an S4 RNA-binding domain. A disordered region spans residues 163 to 201 (VLEKTKSEAPAEETVEAPAEETVEAPAEEKKEESPSTES). Positions 172-185 (PAEETVEAPAEETV) are enriched in acidic residues. A compositionally biased stretch (basic and acidic residues) spans 189–201 (AEEKKEESPSTES).

It belongs to the universal ribosomal protein uS4 family. As to quaternary structure, part of the 30S ribosomal subunit. Contacts protein S5. The interaction surface between S4 and S5 is involved in control of translational fidelity.

In terms of biological role, one of the primary rRNA binding proteins, it binds directly to 16S rRNA where it nucleates assembly of the body of the 30S subunit. Functionally, with S5 and S12 plays an important role in translational accuracy. In Nitrosopumilus maritimus (strain SCM1), this protein is Small ribosomal subunit protein uS4.